Consider the following 502-residue polypeptide: Adenylate cyclase (502 aa).

The Cytoplasmic segment spans residues Met1 to Gln25. Residues Ile26–Ala46 form a helical membrane-spanning segment. The Lumenal, thylakoid portion of the chain corresponds to Lys47–Ala203. Residues Val204–Ala226 form a helical membrane-spanning segment. One can recognise an HAMP domain in the interval Gln227–Asn280. Residues Gln227–Ala502 are Cytoplasmic-facing. One can recognise a Guanylate cyclase domain in the interval Thr320–Glu451. Residues Asp325 and Asp369 each contribute to the Mg(2+) site.

It belongs to the adenylyl cyclase class-3 family. Mg(2+) is required as a cofactor.

The protein localises to the cellular thylakoid membrane. It carries out the reaction ATP = 3',5'-cyclic AMP + diphosphate. May function as a membrane-localized receptor protein. The protein is Adenylate cyclase (cya) of Anabaena cylindrica.